The following is a 190-amino-acid chain: Probable thymidylate kinase (190 aa).

An ATP-binding site is contributed by 7–14 (GIDGAGKT).

The protein belongs to the thymidylate kinase family.

The catalysed reaction is dTMP + ATP = dTDP + ADP. The polypeptide is Probable thymidylate kinase (Thermoplasma volcanium (strain ATCC 51530 / DSM 4299 / JCM 9571 / NBRC 15438 / GSS1)).